Consider the following 154-residue polypeptide: Cindoxin (154 aa).

Residues 3 to 145 enclose the Flavodoxin-like domain; it reads ALILYGTETG…TAEEWAREIL (143 aa). FMN contacts are provided by residues 9–13 and 89–120; these read TETGN and VFGL…TQVG.

Requires FMN as cofactor.

In terms of biological role, involved in the degradation of cineol (eucalyptol). The FMN protein, cindoxin, shuttles electrons between the FAD-containing cindoxin reductase (CinB) and 1,8-cineole 2-endo-monooxygenase (CinA). This Citrobacter braakii protein is Cindoxin (cinC).